We begin with the raw amino-acid sequence, 263 residues long: Antigen 10-3 (263 aa).

The N-terminal stretch at 1–21 (MNIYLIGILCIVGLIISQGST) is a signal peptide. Residues 70 to 207 (GNKKDKQPTQ…QINDGTSDKP (138 aa)) are disordered. Positions 78–90 (TQKTTPKPTTPKQ) are enriched in low complexity. 5 consecutive repeat copies span residues 81–107 (TTPK…TIKR), 108–134 (TTPK…TIKR), 135–161 (TTPK…TIKR), 162–188 (TTPK…TIKR), and 189–206 (TTPK…TSDK). The interval 81–189 (TTPKPTTPKQ…TSDTHTIKRT (109 aa)) is 5 X 27 AA tandem repeats. 4 stretches are compositionally biased toward basic and acidic residues: residues 95–104 (TSDKTSDTHT), 122–131 (TSDKTSDTHT), 149–158 (TSDKTSDTHT), and 176–185 (TSDKTSDTHT).

This Schistosoma mansoni (Blood fluke) protein is Antigen 10-3.